Reading from the N-terminus, the 174-residue chain is Gamma-crystallin D (174 aa).

Beta/gamma crystallin 'Greek key' domains are found at residues 2 to 40 (GKIT…RVDS) and 41 to 83 (GCWM…RLIP). The tract at residues 84–87 (HSGS) is connecting peptide. 2 consecutive Beta/gamma crystallin 'Greek key' domains span residues 88–128 (HRIR…NVLE) and 129–171 (GSWV…RRVI).

The protein belongs to the beta/gamma-crystallin family. As to quaternary structure, monomer.

Functionally, crystallins are the dominant structural components of the vertebrate eye lens. This chain is Gamma-crystallin D (CRYGD), found in Homo sapiens (Human).